The chain runs to 236 residues: tRNA1(Val) (adenine(37)-N6)-methyltransferase (236 aa).

It belongs to the methyltransferase superfamily. tRNA (adenine-N(6)-)-methyltransferase family.

It is found in the cytoplasm. The enzyme catalyses adenosine(37) in tRNA1(Val) + S-adenosyl-L-methionine = N(6)-methyladenosine(37) in tRNA1(Val) + S-adenosyl-L-homocysteine + H(+). Its function is as follows. Specifically methylates the adenine in position 37 of tRNA(1)(Val) (anticodon cmo5UAC). The chain is tRNA1(Val) (adenine(37)-N6)-methyltransferase from Aeromonas salmonicida (strain A449).